We begin with the raw amino-acid sequence, 750 residues long: Neprilysin (750 aa).

G2 carries the N-myristoyl glycine lipid modification. The Cytoplasmic segment spans residues 2 to 28 (GRSESQMDITDINAPKPKKKQRWTPLE). Residues S4 and S6 each carry the phosphoserine modification. Positions 16-23 (PKPKKKQR) match the Stop-transfer sequence motif. Residues 29–51 (ISLSVLVLLLTIIAVTMIALYAT) form a helical; Signal-anchor for type II membrane protein membrane-spanning segment. Residues 52 to 750 (YDDGICKSSD…MNPERKCRVW (699 aa)) are Extracellular-facing. One can recognise a Peptidase M13 domain in the interval 56–750 (ICKSSDCIKS…MNPERKCRVW (695 aa)). Intrachain disulfides connect C57-C62, C80-C735, C88-C695, C143-C411, C234-C242, and C621-C747. R103 is a binding site for a peptide. N-linked (GlcNAc...) asparagine glycans are attached at residues N145 and N211. N285, N311, and N325 each carry an N-linked (GlcNAc...) asparagine glycan. H584 is a binding site for Zn(2+). E585 is an active-site residue. Position 588 (H588) interacts with Zn(2+). N628 carries an N-linked (GlcNAc...) asparagine glycan. A Zn(2+)-binding site is contributed by E647. The active-site Proton donor is D651.

The protein belongs to the peptidase M13 family. It depends on Zn(2+) as a cofactor. In terms of processing, myristoylation is a determinant of membrane targeting. Post-translationally, glycosylation at Asn-628 is necessary both for surface expression and neutral endopeptidase activity.

The protein localises to the cell membrane. It carries out the reaction Preferential cleavage of polypeptides between hydrophobic residues, particularly with Phe or Tyr at P1'.. The enzyme catalyses substance P + H2O = substance P(1-9) + L-Leu-L-Met-NH2. It catalyses the reaction substance P + H2O = substance P(1-7) + L-Phe-Gly-L-Leu-L-Met-NH2. The catalysed reaction is neurotensin + H2O = neurotensin(1-11) + L-isoleucyl-L-leucine. It carries out the reaction neurotensin + H2O = neurotensin(1-10) + L-tyrosyl-L-isoleucyl-L-leucine. Its function is as follows. Thermolysin-like specificity, but is almost confined on acting on polypeptides of up to 30 amino acids. Biologically important in the destruction of opioid peptides such as Met- and Leu-enkephalins by cleavage of a Gly-Phe bond. Catalyzes cleavage of bradykinin, substance P and neurotensin peptides. Able to cleave angiotensin-1, angiotensin-2 and angiotensin 1-9. Involved in the degradation of the atrial natriuretic factor (ANF). Displays UV-inducible elastase activity toward skin preelastic and elastic fibers. The sequence is that of Neprilysin from Mus musculus (Mouse).